The chain runs to 256 residues: Small ribosomal subunit protein eS1 (256 aa).

Basic residues predominate over residues 1 to 18 (MAVGKNKRLSKGKKGLKK). Residues 1–22 (MAVGKNKRLSKGKKGLKKKTQD) are disordered. An N-acetylalanine; partial modification is found at Ala-2.

The protein belongs to the eukaryotic ribosomal protein eS1 family. As to quaternary structure, component of the small ribosomal subunit (SSU). Mature N.crassa ribosomes consist of a small (40S) and a large (60S) subunit. The 40S small subunit contains 1 molecule of ribosomal RNA (18S rRNA) and at least 32 different proteins. The large 60S subunit contains 3 rRNA molecules (26S, 5.8S and 5S rRNA) and at least 42 different proteins.

The protein localises to the cytoplasm. In terms of biological role, component of the ribosome, a large ribonucleoprotein complex responsible for the synthesis of proteins in the cell. The small ribosomal subunit (SSU) binds messenger RNAs (mRNAs) and translates the encoded message by selecting cognate aminoacyl-transfer RNA (tRNA) molecules. The large subunit (LSU) contains the ribosomal catalytic site termed the peptidyl transferase center (PTC), which catalyzes the formation of peptide bonds, thereby polymerizing the amino acids delivered by tRNAs into a polypeptide chain. The nascent polypeptides leave the ribosome through a tunnel in the LSU and interact with protein factors that function in enzymatic processing, targeting, and the membrane insertion of nascent chains at the exit of the ribosomal tunnel. This chain is Small ribosomal subunit protein eS1 (rps1), found in Neurospora crassa (strain ATCC 24698 / 74-OR23-1A / CBS 708.71 / DSM 1257 / FGSC 987).